A 70-amino-acid chain; its full sequence is Small ribosomal subunit protein bS21B (70 aa).

It belongs to the bacterial ribosomal protein bS21 family.

This is Small ribosomal subunit protein bS21B from Cupriavidus metallidurans (strain ATCC 43123 / DSM 2839 / NBRC 102507 / CH34) (Ralstonia metallidurans).